The sequence spans 325 residues: UPF0285 protein MMP0642 (325 aa).

It belongs to the UPF0285 family.

The protein is UPF0285 protein MMP0642 of Methanococcus maripaludis (strain DSM 14266 / JCM 13030 / NBRC 101832 / S2 / LL).